We begin with the raw amino-acid sequence, 473 residues long: Serine palmitoyltransferase 1 (473 aa).

Over 1–15 (MATVAEQWVLVEMVQ) the chain is Lumenal. The interaction with SPTLC2 stretch occupies residues 1–66 (MATVAEQWVL…KEELIEEWQP (66 aa)). The chain crosses the membrane as a helical span at residues 16–36 (ALYEAPAYHLILEGILILWII). Residues 37–473 (RLVFSKTYKL…IREAAQAVLL (437 aa)) are Cytoplasmic-facing. Y164 is subject to Phosphotyrosine; by ABL.

This sequence belongs to the class-II pyridoxal-phosphate-dependent aminotransferase family. In terms of assembly, component of the serine palmitoyltransferase (SPT) complex, which is also composed of SPTLC2 or SPTLC3 and SPTSSA or SPTSSB. The heterodimer with SPTLC2 or SPTLC3 forms the catalytic core of the enzyme, while SPTSSA or SPTSSB subunits determine substrate specificity. SPT also interacts with ORMDL proteins, especially ORMDL3, which negatively regulate SPT activity in the presence of ceramides. Forms dimers of heterodimers with SPTLC2. Interacts with RTN4 (isoform B). Requires pyridoxal 5'-phosphate as cofactor. Phosphorylation at Tyr-164 inhibits activity and promotes cell survival. As to expression, expressed in astrocytes.

The protein resides in the endoplasmic reticulum membrane. It carries out the reaction L-serine + hexadecanoyl-CoA + H(+) = 3-oxosphinganine + CO2 + CoA. The catalysed reaction is octadecanoyl-CoA + L-serine + H(+) = 3-oxoeicosasphinganine + CO2 + CoA. The enzyme catalyses tetradecanoyl-CoA + L-serine + H(+) = 3-oxohexadecasphinganine + CO2 + CoA. It catalyses the reaction dodecanoyl-CoA + L-serine + H(+) = 3-oxotetradecasphinganine + CO2 + CoA. It participates in lipid metabolism; sphingolipid metabolism. SPT complex catalytic activity is negatively regulated by ORMDL proteins, including ORMDL3, in the presence of ceramides. This mechanism allows to maintain ceramide levels at sufficient concentrations for the production of complex sphingolipids, but which prevents the accumulation of ceramides to levels that trigger apoptosis. Component of the serine palmitoyltransferase multisubunit enzyme (SPT) that catalyzes the initial and rate-limiting step in sphingolipid biosynthesis by condensing L-serine and activated acyl-CoA (most commonly palmitoyl-CoA) to form long-chain bases. The SPT complex is also composed of SPTLC2 or SPTLC3 and SPTSSA or SPTSSB. Within this complex, the heterodimer with SPTLC2 or SPTLC3 forms the catalytic core. The composition of the serine palmitoyltransferase (SPT) complex determines the substrate preference. The SPTLC1-SPTLC2-SPTSSA complex shows a strong preference for C16-CoA substrate, while the SPTLC1-SPTLC3-SPTSSA isozyme uses both C14-CoA and C16-CoA as substrates, with a slight preference for C14-CoA. The SPTLC1-SPTLC2-SPTSSB complex shows a strong preference for C18-CoA substrate, while the SPTLC1-SPTLC3-SPTSSB isozyme displays an ability to use a broader range of acyl-CoAs, without apparent preference. Required for adipocyte cell viability and metabolic homeostasis. This chain is Serine palmitoyltransferase 1, found in Rattus norvegicus (Rat).